Here is a 398-residue protein sequence, read N- to C-terminus: MNIHEYQAKAVLREFGVPVSHGYPIFKASEAEAAATKLGGPVWVVKSQIHAGGRGKGKFKEASAGDKGGVRLAKSVDEVKTYAEQMLHATLVTVQTGPAGKQVNRLYIEEGSEIDKEFYLSLLVDRATSRISFVVSTEGGMSIEDVAHDTPEKIVSFTVDPATGIMSHHGRAVANALGLKGDQAKQAESLVTKLYTAFLAKDMEMLEINPLVLTKQGDLKCLDAKMSFDGNSLYRHADIQGLRDESEEDAKEIEASKYDLNYVTLDGTIGCMVNGAGLAMATMDIIKLYGMTPANFLDVGGGASKEKVTAAFKIITADPNVKGILINIFGGIMKCDIIAEGVVAAVKEVGLDVPLVVRLEGTNVEAGKKIIKHSGLNVLPADNLDDAAQKIVNAVKGA.

Residues 9–254 form the ATP-grasp domain; the sequence is KAVLREFGVP…ESEEDAKEIE (246 aa). ATP-binding positions include lysine 46, 53–55, glutamate 109, serine 112, and glutamate 117; that span reads GRG. Mg(2+) contacts are provided by asparagine 209 and aspartate 223. Substrate-binding positions include asparagine 274 and 331-333; that span reads GIM.

It belongs to the succinate/malate CoA ligase beta subunit family. In terms of assembly, heterotetramer of two alpha and two beta subunits. It depends on Mg(2+) as a cofactor.

It catalyses the reaction succinate + ATP + CoA = succinyl-CoA + ADP + phosphate. It carries out the reaction GTP + succinate + CoA = succinyl-CoA + GDP + phosphate. The protein operates within carbohydrate metabolism; tricarboxylic acid cycle; succinate from succinyl-CoA (ligase route): step 1/1. Functionally, succinyl-CoA synthetase functions in the citric acid cycle (TCA), coupling the hydrolysis of succinyl-CoA to the synthesis of either ATP or GTP and thus represents the only step of substrate-level phosphorylation in the TCA. The beta subunit provides nucleotide specificity of the enzyme and binds the substrate succinate, while the binding sites for coenzyme A and phosphate are found in the alpha subunit. The protein is Succinate--CoA ligase [ADP-forming] subunit beta of Rhodopseudomonas palustris (strain HaA2).